Reading from the N-terminus, the 474-residue chain is Protein FAM161A (474 aa).

Disordered regions lie at residues 78-126 (SSSS…PGEI), 185-210 (QKRR…DDAE), and 308-364 (REEL…DQGL). A coiled-coil region spans residues 188 to 250 (REKASDAQET…KKTRERSKAA (63 aa)). The required for interaction with CFAP418 stretch occupies residues 274–454 (KLRELCRAKK…PTASSRGREQ (181 aa)). Over residues 325–335 (LQSSPWPSHST) the composition is skewed to polar residues. Glycyl lysine isopeptide (Lys-Gly) (interchain with G-Cter in SUMO2) cross-links involve residues lysine 397 and lysine 413. A disordered region spans residues 412–474 (LKETRRPNPS…KELARIGGAR (63 aa)). Positions 422-431 (PRHKSPRRSA) are enriched in basic residues. Residues 450-468 (RGREQAIRRSEKARMKELA) show a composition bias toward basic and acidic residues.

It belongs to the FAM161 family. As to quaternary structure, interacts (via central region) with CFAP418 (via N-terminus); the interaction is direct. Interacts (via C-terminus) with microtubules. Interacts with LCA5. Interacts with CEP290. Interacts with SDCCAG8. Interacts with FAM161B. Interacts with POC1B. Interacts with CEP78. Forms a microtubule-associated complex with POC5, CETN2 and POC1B. Interacts with CCDC15. In terms of tissue distribution, expressed in the retina and kidney.

It localises to the cytoplasm. The protein localises to the cytoskeleton. Its subcellular location is the cilium basal body. The protein resides in the cell projection. It is found in the cilium. It localises to the microtubule organizing center. The protein localises to the centrosome. Its subcellular location is the centriole. Involved in ciliogenesis. The sequence is that of Protein FAM161A from Rattus norvegicus (Rat).